Here is a 259-residue protein sequence, read N- to C-terminus: Ras-related protein Rab-34 (259 aa).

Met-1 is modified (N-acetylmethionine). Residues Ser-62, Val-63, Gly-64, Lys-65, Thr-66, Asp-78, Tyr-81, and Thr-84 each coordinate GTP. Position 66 (Thr-66) interacts with Mg(2+). The Switch 1 motif lies at 71-89 (RFCKDTFDKNYKATIGVDF). Residues Thr-84 and Asp-107 each contribute to the Mg(2+) site. The Switch 2 motif lies at 108–127 (TAGQERFKCIASTYYRGAQA). 4 residues coordinate GTP: Gly-110, Lys-167, Asp-169, and Ser-198. A phosphoserine mark is found at Ser-241 and Ser-244. 2 S-geranylgeranyl cysteine lipidation sites follow: Cys-257 and Cys-258.

Belongs to the small GTPase superfamily. Rab family. As to quaternary structure, interacts with RILP. The GTP-bound form interacts with REP15. Mg(2+) is required as a cofactor.

It localises to the cytoplasm. It is found in the golgi apparatus. Its subcellular location is the cytoplasmic vesicle. The protein resides in the phagosome. The protein localises to the phagosome membrane. It localises to the cell projection. It is found in the cilium. Its subcellular location is the cytoskeleton. The protein resides in the microtubule organizing center. The protein localises to the centrosome. It localises to the centriole. It carries out the reaction GTP + H2O = GDP + phosphate + H(+). Regulated by guanine nucleotide exchange factors (GEFs) which promote the exchange of bound GDP for free GTP. Regulated by GTPase activating proteins (GAPs) which increase the GTP hydrolysis activity. Inhibited by GDP dissociation inhibitors (GDIs). The small GTPases Rab are key regulators of intracellular membrane trafficking, from the formation of transport vesicles to their fusion with membranes. Rabs cycle between an inactive GDP-bound form and an active GTP-bound form that is able to recruit to membranes different sets of downstream effectors directly responsible for vesicle formation, movement, tethering and fusion. RAB34 transports protein involved in the redistribution of lysosomes to the peri-Golgi region. Plays a role in the maturation of phagosomes that engulf pathogens, such as S.aureus and M.tuberculosis. Plays a role in the fusion of phagosomes with lysosomes. Required for the early steps of intracellular ciliogenesis, the cilium assembly pathway initiated by trafficking and docking of ciliary vesicles to the centrioles in the cytoplasm, followed by axoneme formation in the cytoplasm. After axoneme elongation, the centrioles migrate close to the cell surface so that ciliary vesicles can fuse with the plasma membrane to expose cilia to the extracellular space. It seems dispensable for ciliogenesis via the extracellular pathway where cilium assembly begins after migration and docking of the centriole to the plasma membrane. Also acts as a positive regulator of hedgehog signaling and regulates ciliary function. In Sus scrofa (Pig), this protein is Ras-related protein Rab-34 (RAB34).